A 338-amino-acid polypeptide reads, in one-letter code: Taste receptor type 2 member 39 (338 aa).

The Extracellular segment spans residues 1–30; the sequence is MLGRCFPPNTKEKQQLRMIKLCDPAESELS. Residues 31–51 form a helical membrane-spanning segment; the sequence is PFLITLTLAVLLAEYLTGIIA. At 52–74 the chain is on the cytoplasmic side; it reads NGFITAIHAAEWVQNKSVSTSGR. Residues 75–95 traverse the membrane as a helical segment; that stretch reads ILVFLSVSRIALQSLMMLEIT. The Extracellular segment spans residues 96–116; that stretch reads ISSTSLSFYSEDAVYYAFKIS. A helical membrane pass occupies residues 117–137; the sequence is FIFLNFCSLWFAAWLSFFYFV. Residues 138–156 lie on the Cytoplasmic side of the membrane; that stretch reads KIANFSYPLFLKLRWRISG. The helical transmembrane segment at 157-177 threads the bilayer; that stretch reads LIPWLLWLSVFISFSHSMFCI. The Extracellular segment spans residues 178–205; that stretch reads NICTGYCDNSFPIHSSNSTEKTYFSEIS. An N-linked (GlcNAc...) asparagine glycan is attached at Asn-194. The helical transmembrane segment at 206–226 threads the bilayer; sequence VVSLAFFFNLGIVIPLIMFIL. The Cytoplasmic segment spans residues 227–262; the sequence is AAILLILSLKRHTLHMGSNATGSKDPSMEAHIGAIK. A helical membrane pass occupies residues 263–283; that stretch reads ATSYFLILYIFNAVALFIYLS. The Extracellular portion of the chain corresponds to 284 to 291; the sequence is NMFDINSL. Residues 292–312 traverse the membrane as a helical segment; it reads WNTLCQIIMAAYPASHSILLI. Over 313-338 the chain is Cytoplasmic; that stretch reads KDNPGLRRAWKQLQHRLHLYPKQWTL.

This sequence belongs to the G-protein coupled receptor T2R family.

Its subcellular location is the membrane. In terms of biological role, receptor that may play a role in the perception of bitterness and is gustducin-linked. May play a role in sensing the chemical composition of the gastrointestinal content. The activity of this receptor may stimulate alpha gustducin, mediate PLC-beta-2 activation and lead to the gating of TRPM5. The polypeptide is Taste receptor type 2 member 39 (TAS2R39) (Macaca mulatta (Rhesus macaque)).